The primary structure comprises 499 residues: Cysteine--tRNA ligase (499 aa).

Cysteine 29 lines the Zn(2+) pocket. The 'HIGH' region motif lies at 31 to 41; that stretch reads VTVYDLCHLGH. Zn(2+) contacts are provided by cysteine 213, histidine 238, and glutamate 242. A 'KMSKS' region motif is present at residues 270-274; the sequence is KMSKS. Lysine 273 is a binding site for ATP.

Belongs to the class-I aminoacyl-tRNA synthetase family. Monomer. Requires Zn(2+) as cofactor.

It is found in the cytoplasm. It carries out the reaction tRNA(Cys) + L-cysteine + ATP = L-cysteinyl-tRNA(Cys) + AMP + diphosphate. This chain is Cysteine--tRNA ligase, found in Synechococcus sp. (strain CC9902).